The primary structure comprises 325 residues: Protein TMED8 (325 aa).

The segment at 1-78 (MSDLQAAEGP…MVSPVSKDAT (78 aa)) is disordered. The GOLD domain maps to 159–323 (PPCIWTFAKV…NKTLYFHIYY (165 aa)). The residue at position 169 (K169) is an N6-acetyllysine. Positions 232 to 267 (TVQVSDSSDDEDEEEEEEEEIEEPVPAGDVERGSRS) are disordered. A compositionally biased stretch (acidic residues) spans 238–254 (SSDDEDEEEEEEEEIEE).

This Homo sapiens (Human) protein is Protein TMED8 (TMED8).